The following is a 296-amino-acid chain: tRNA dimethylallyltransferase (296 aa).

11-18 (GPTAVGKT) contacts ATP. 13–18 (TAVGKT) lines the substrate pocket. The segment at 36 to 39 (DSQQ) is interaction with substrate tRNA.

It belongs to the IPP transferase family. As to quaternary structure, monomer. Mg(2+) serves as cofactor.

The enzyme catalyses adenosine(37) in tRNA + dimethylallyl diphosphate = N(6)-dimethylallyladenosine(37) in tRNA + diphosphate. In terms of biological role, catalyzes the transfer of a dimethylallyl group onto the adenine at position 37 in tRNAs that read codons beginning with uridine, leading to the formation of N6-(dimethylallyl)adenosine (i(6)A). The sequence is that of tRNA dimethylallyltransferase from Streptococcus agalactiae serotype III (strain NEM316).